Reading from the N-terminus, the 704-residue chain is Glycine--tRNA ligase beta subunit (704 aa).

The protein belongs to the class-II aminoacyl-tRNA synthetase family. In terms of assembly, tetramer of two alpha and two beta subunits.

Its subcellular location is the cytoplasm. The enzyme catalyses tRNA(Gly) + glycine + ATP = glycyl-tRNA(Gly) + AMP + diphosphate. The chain is Glycine--tRNA ligase beta subunit from Rhizobium johnstonii (strain DSM 114642 / LMG 32736 / 3841) (Rhizobium leguminosarum bv. viciae).